The sequence spans 130 residues: ATP synthase epsilon chain (130 aa).

The protein belongs to the ATPase epsilon chain family. As to quaternary structure, F-type ATPases have 2 components, CF(1) - the catalytic core - and CF(0) - the membrane proton channel. CF(1) has five subunits: alpha(3), beta(3), gamma(1), delta(1), epsilon(1). CF(0) has three main subunits: a, b and c.

The protein localises to the cell inner membrane. In terms of biological role, produces ATP from ADP in the presence of a proton gradient across the membrane. This chain is ATP synthase epsilon chain, found in Campylobacter hominis (strain ATCC BAA-381 / DSM 21671 / CCUG 45161 / LMG 19568 / NCTC 13146 / CH001A).